Consider the following 366-residue polypeptide: MQVIVALAALSSLAAPALGFSIPRGVPVSQSMIDVKLSATGNSMVKATITNNGNRALNLLKFHTIMDSNPTRKVSIESEDGKEIQFTGMMPTYKEKDLKPSYFISLPPKGTVEHSFDIARTHDLSRGGKFTLKAEGMVPIAEENGTEITGAAKYHSNELHMTIDGEKAASVENAFGIVKRGPRSRITKRTSIDMQSCGNSQELQALTAALKASAQLSSMSAQAVSQNQDKYMEYFKDPQYMQTVQSRFQAVAQESSSTTGGGTTYHCSDTMGGCEEGVLAYTLPSQNEVFNCPIYYSDLPPLSNECHAQDQATTTLHELTHNPAVQEPFCEDNGYGYERATALSAEKAVQNADSYALFANAIYVGC.

The N-terminal stretch at 1–19 is a signal peptide; that stretch reads MQVIVALAALSSLAAPALG. Residues 20-189 constitute a propeptide that is removed on maturation; it reads FSIPRGVPVS…RGPRSRITKR (170 aa). 3 cysteine pairs are disulfide-bonded: C197–C267, C274–C292, and C306–C366. H317 is a binding site for Zn(2+). E318 is an active-site residue. Residues H321 and D332 each contribute to the Zn(2+) site.

It belongs to the peptidase M35 family. Zn(2+) is required as a cofactor.

It is found in the secreted. The catalysed reaction is Preferential cleavage of bonds with hydrophobic residues in P1'. Also 3-Asn-|-Gln-4 and 8-Gly-|-Ser-9 bonds in insulin B chain.. Probable secreted metalloprotease that shows high activities on basic nuclear substrates such as histone and protamine. May be involved in virulence. The sequence is that of Probable neutral protease 2 homolog B (NpII-B) from Trichophyton rubrum (Athlete's foot fungus).